The following is a 658-amino-acid chain: L-type lectin-domain containing receptor kinase V.4 (658 aa).

The N-terminal stretch at 1–25 (MSRTIGSRVIFLILALFCCTENSRG) is a signal peptide. Positions 26-248 (KLVMQGSAGF…RAMHYMLSWF (223 aa)) are legume-lectin like. Residues 26 to 280 (KLVMQGSAGF…EKSLVYRIVL (255 aa)) lie on the Extracellular side of the membrane. 2 N-linked (GlcNAc...) asparagine glycosylation sites follow: Asn-66 and Asn-196. Residues 281–301 (VTSLALVLFVALVASALSIFF) form a helical membrane-spanning segment. The Cytoplasmic segment spans residues 302-658 (YRRHKKVKEV…LTEPFTSRGR (357 aa)). Residues 334–592 (KGFKQLLGKG…LGVLCSHQAV (259 aa)) form the Protein kinase domain. ATP contacts are provided by residues 340-348 (LGKGGFGQV) and Lys-363. The Proton acceptor role is filled by Asp-460.

It in the C-terminal section; belongs to the protein kinase superfamily. Ser/Thr protein kinase family. This sequence in the N-terminal section; belongs to the leguminous lectin family.

The protein resides in the cell membrane. It catalyses the reaction L-seryl-[protein] + ATP = O-phospho-L-seryl-[protein] + ADP + H(+). The enzyme catalyses L-threonyl-[protein] + ATP = O-phospho-L-threonyl-[protein] + ADP + H(+). In terms of biological role, involved in resistance response to the pathogenic oomycetes Phytophthora infestans and Phytophthora capsici and to the pathogenic bacteria Pseudomonas syringae. This chain is L-type lectin-domain containing receptor kinase V.4, found in Arabidopsis thaliana (Mouse-ear cress).